The sequence spans 360 residues: Mitogen-activated protein kinase 1 (360 aa).

Ala2 carries the N-acetylalanine modification. The Protein kinase domain occupies 25–313; that stretch reads YTNLSYIGEG…VEQALAHPYL (289 aa). Ser29 bears the Phosphoserine; by SGK1 mark. Residues 31-39 and Lys54 each bind ATP; that span reads IGEGAYGMV. The Proton acceptor role is filled by Asp149. Thr185 is subject to Phosphothreonine; by MAP2K1 and MAP2K2. A TXY motif is present at residues 185 to 187; sequence TEY. A Phosphotyrosine; by MAP2K1 and MAP2K2 modification is found at Tyr187. Phosphothreonine; by autocatalysis is present on Thr190. Residues Ser246, Ser248, and Ser284 each carry the phosphoserine modification.

It belongs to the protein kinase superfamily. CMGC Ser/Thr protein kinase family. MAP kinase subfamily. As to quaternary structure, binds both upstream activators and downstream substrates in multimolecular complexes. Interacts with ADAM15, ARHGEF2, ARRB2, DAPK1 (via death domain), HSF4, IER3, IPO7, MKNK2, MORG1, NISCH, PEA15, SGK1, and isoform 1 of NEK2. Interacts (via phosphorylated form) with TPR (via C-terminal region and phosphorylated form); the interaction requires dimerization of MAPK1/ERK2 and increases following EGF stimulation. Interacts with MAP2K1. Interacts with DUSP6. Interacts (phosphorylated form) with CAV2 ('Tyr-19'-phosphorylated form); the interaction, promoted by insulin, leads to nuclear location and MAPK1 activation. MKNK2 isoform 1 binding prevents from dephosphorylation and inactivation. Interacts with DCC. The phosphorylated form interacts with PML. Interacts with STYX. Interacts with CDK2AP2. Interacts with CAVIN4. Interacts with DUSP7; the interaction enhances DUSP7 phosphatase activity. Interacts with GIT1; this interaction is necessary for MAPK1 localization to focal adhesions. Interacts with ZNF263. Interacts with phosphoglycerate kinase PGK1; the interaction is direct, occurs under hypoxic conditions, and promotes interaction between PGK1 and PIN1. Requires Mg(2+) as cofactor. Post-translationally, dually phosphorylated on Thr-185 and Tyr-187, which activates the enzyme. Phosphorylated upon FLT3 and KIT signaling. Phosphorylation on Ser-29 by SGK1 results in its activation by enhancing its interaction with MAP2K1/MEK1 and MAP2K2/MEK2. Phosphorylation at Ser-246 and Ser-248 as well as autophosphorylation at Thr-190 promote nuclear localization. Ligand-activated ALK induces tyrosine phosphorylation. Dephosphorylated by PTPRJ at Tyr-187. Dephosphorylated by DUSP1 and DUSP2 at Thr-185 and Tyr-187. ISGylated. In terms of processing, ubiquitinated by TRIM15 via 'Lys-63'-linked ubiquitination; leading to activation. Deubiquitinated by CYLD.

It localises to the nucleus. It is found in the cytoplasm. The protein localises to the cytoskeleton. The protein resides in the microtubule organizing center. Its subcellular location is the centrosome. It localises to the spindle. It is found in the membrane. The protein localises to the caveola. The protein resides in the cell junction. Its subcellular location is the focal adhesion. The catalysed reaction is L-seryl-[protein] + ATP = O-phospho-L-seryl-[protein] + ADP + H(+). It carries out the reaction L-threonyl-[protein] + ATP = O-phospho-L-threonyl-[protein] + ADP + H(+). With respect to regulation, phosphorylated by MAP2K1/MEK1 and MAP2K2/MEK2 on Thr-185 and Tyr-187 in response to external stimuli like insulin or NGF. Both phosphorylations are required for activity. This phosphorylation causes dramatic conformational changes, which enable full activation and interaction of MAPK1/ERK2 with its substrates. Phosphorylation on Ser-29 by SGK1 results in its activation by enhancing its interaction with MAP2K1/MEK1 and MAP2K2/MEK2. Dephosphorylated and inactivated by DUSP1, DUSP3, DUSP6 and DUSP9. Inactivated by pyrimidylpyrrole inhibitors. Its function is as follows. Serine/threonine kinase which acts as an essential component of the MAP kinase signal transduction pathway. MAPK1/ERK2 and MAPK3/ERK1 are the 2 MAPKs which play an important role in the MAPK/ERK cascade. They participate also in a signaling cascade initiated by activated KIT and KITLG/SCF. Depending on the cellular context, the MAPK/ERK cascade mediates diverse biological functions such as cell growth, adhesion, survival and differentiation through the regulation of transcription, translation, cytoskeletal rearrangements. The MAPK/ERK cascade also plays a role in initiation and regulation of meiosis, mitosis, and postmitotic functions in differentiated cells by phosphorylating a number of transcription factors. About 160 substrates have already been discovered for ERKs. Many of these substrates are localized in the nucleus, and seem to participate in the regulation of transcription upon stimulation. However, other substrates are found in the cytosol as well as in other cellular organelles, and those are responsible for processes such as translation, mitosis and apoptosis. Moreover, the MAPK/ERK cascade is also involved in the regulation of the endosomal dynamics, including lysosome processing and endosome cycling through the perinuclear recycling compartment (PNRC); as well as in the fragmentation of the Golgi apparatus during mitosis. The substrates include transcription factors (such as ATF2, BCL6, ELK1, ERF, FOS, HSF4 or SPZ1), cytoskeletal elements (such as CANX, CTTN, GJA1, MAP2, MAPT, PXN, SORBS3 or STMN1), regulators of apoptosis (such as BAD, BTG2, CASP9, DAPK1, IER3, MCL1 or PPARG), regulators of translation (such as EIF4EBP1 and FXR1) and a variety of other signaling-related molecules (like ARHGEF2, DCC, FRS2 or GRB10). Protein kinases (such as RAF1, RPS6KA1/RSK1, RPS6KA3/RSK2, RPS6KA2/RSK3, RPS6KA6/RSK4, SYK, MKNK1/MNK1, MKNK2/MNK2, RPS6KA5/MSK1, RPS6KA4/MSK2, MAPKAPK3 or MAPKAPK5) and phosphatases (such as DUSP1, DUSP4, DUSP6 or DUSP16) are other substrates which enable the propagation the MAPK/ERK signal to additional cytosolic and nuclear targets, thereby extending the specificity of the cascade. Mediates phosphorylation of TPR in response to EGF stimulation. May play a role in the spindle assembly checkpoint. Phosphorylates PML and promotes its interaction with PIN1, leading to PML degradation. Phosphorylates CDK2AP2. Phosphorylates phosphoglycerate kinase PGK1 under hypoxic conditions to promote its targeting to the mitochondrion and suppress the formation of acetyl-coenzyme A from pyruvate. In terms of biological role, acts as a transcriptional repressor. Binds to a [GC]AAA[GC] consensus sequence. Repress the expression of interferon gamma-induced genes. Seems to bind to the promoter of CCL5, DMP1, IFIH1, IFITM1, IRF7, IRF9, LAMP3, OAS1, OAS2, OAS3 and STAT1. Transcriptional activity is independent of kinase activity. The chain is Mitogen-activated protein kinase 1 from Bos taurus (Bovine).